We begin with the raw amino-acid sequence, 240 residues long: Probable phosphatase Pcar_2586 (240 aa).

9 residues coordinate Zn(2+): H12, H14, H20, H45, E78, H105, H136, D197, and H199.

It belongs to the PHP family. It depends on Zn(2+) as a cofactor.

This Syntrophotalea carbinolica (strain DSM 2380 / NBRC 103641 / GraBd1) (Pelobacter carbinolicus) protein is Probable phosphatase Pcar_2586.